Consider the following 73-residue polypeptide: Disintegrin trigramin-gamma (73 aa).

Positions 1-73 (EAGEDCDCGS…AGCPRNPLHA (73 aa)) constitute a Disintegrin domain. Intrachain disulfides connect cysteine 6-cysteine 21, cysteine 8-cysteine 16, cysteine 15-cysteine 38, cysteine 29-cysteine 35, cysteine 34-cysteine 59, and cysteine 47-cysteine 66. The Cell attachment site motif lies at 51–53 (RGD).

It belongs to the venom metalloproteinase (M12B) family. P-II subfamily. P-IIa sub-subfamily. Monomer (disintegrin). Expressed by the venom gland.

Its subcellular location is the secreted. Inhibits fibrinogen interaction with platelets. Acts by binding to alpha-IIb/beta-3 (ITGA2B/ITGB3) on the platelet surface and inhibits aggregation induced by ADP, thrombin, platelet-activating factor and collagen. The sequence is that of Disintegrin trigramin-gamma from Craspedocephalus gramineus (Bamboo pit viper).